The following is a 215-amino-acid chain: Cytochrome b6 (215 aa).

The helical transmembrane segment at 32–52 threads the bilayer; it reads IFYCLGGVTLVCFIIQFATGF. C35 provides a ligand contact to heme c. Residues H86 and H100 each coordinate heme b. A run of 3 helical transmembrane segments spans residues 90 to 110, 116 to 136, and 186 to 206; these read ASMM…TGGF, LTWI…VTGY, and LHTF…FLMI. 2 residues coordinate heme b: H187 and H202.

Belongs to the cytochrome b family. PetB subfamily. As to quaternary structure, the 4 large subunits of the cytochrome b6-f complex are cytochrome b6, subunit IV (17 kDa polypeptide, PetD), cytochrome f and the Rieske protein, while the 4 small subunits are PetG, PetL, PetM and PetN. The complex functions as a dimer. Requires heme b as cofactor. Heme c serves as cofactor.

Its subcellular location is the cellular thylakoid membrane. Component of the cytochrome b6-f complex, which mediates electron transfer between photosystem II (PSII) and photosystem I (PSI), cyclic electron flow around PSI, and state transitions. This chain is Cytochrome b6, found in Acaryochloris marina (strain MBIC 11017).